The chain runs to 380 residues: Cytochrome b (380 aa).

Transmembrane regions (helical) follow at residues 33 to 53, 77 to 98, 113 to 133, and 178 to 198; these read FGSLLGLCLATQILTGLFLAM, WLIRNIHANGASFFFICIYMHI, WNIGVVLLLLTMMTAFVGYVL, and FFAFHFLFPFVIAAATVLHLL. Heme b-binding residues include His-83 and His-97. Heme b-binding residues include His-182 and His-196. An a ubiquinone-binding site is contributed by His-201. A run of 4 helical transmembrane segments spans residues 226 to 246, 288 to 308, 320 to 340, and 347 to 367; these read YKDLLGFVAMLLGLTSLALFA, LGGVLALLFSILVLMVVPILH, LTQFLFWALVADMLILTWIGG, and FIIIGQVASVIYFTIFLVLSP.

The protein belongs to the cytochrome b family. In terms of assembly, the cytochrome bc1 complex contains 3 respiratory subunits (MT-CYB, CYC1 and UQCRFS1), 2 core proteins (UQCRC1 and UQCRC2) and probably 6 low-molecular weight proteins. It depends on heme b as a cofactor.

Its subcellular location is the mitochondrion inner membrane. Component of the ubiquinol-cytochrome c reductase complex (complex III or cytochrome b-c1 complex) that is part of the mitochondrial respiratory chain. The b-c1 complex mediates electron transfer from ubiquinol to cytochrome c. Contributes to the generation of a proton gradient across the mitochondrial membrane that is then used for ATP synthesis. This is Cytochrome b (mt-cyb) from Oncorhynchus mykiss (Rainbow trout).